The chain runs to 723 residues: Nicastrin (723 aa).

The N-terminal stretch at 1–16 (MKKWLVIVLIIAGIRC) is a signal peptide. Topologically, residues 17-678 (DGFSDQVFRT…ESVNLYLMED (662 aa)) are extracellular. Asn-40, Asn-181, Asn-271, Asn-328, Asn-409, and Asn-627 each carry an N-linked (GlcNAc...) asparagine glycan. The chain crosses the membrane as a helical span at residues 679-699 (ASFEYTMILIAVISALLSIFA). The Cytoplasmic portion of the chain corresponds to 700 to 723 (VGRCSETTFIVDEGEPAAEGGEPL).

It belongs to the nicastrin family. As to quaternary structure, component of the gamma-secretase complex, a complex probably composed of the presenilin homodimer (sel-12, hop-1 or spe-4), nicastrin (aph-2), aph-1 and pen-2.

The protein resides in the membrane. Functionally, essential subunit of the gamma-secretase complex, an endoprotease complex that catalyzes the intramembrane cleavage of integral membrane proteins such as Notch (glp-1 or lin-12). It may represents a stabilizing cofactor required for the assembly of the gamma-secretase complex. The protein is Nicastrin (aph-2) of Caenorhabditis elegans.